Reading from the N-terminus, the 497-residue chain is NADH-quinone oxidoreductase subunit N (497 aa).

Transmembrane regions (helical) follow at residues 14-34 (LMAM…MLSI), 45-65 (SLTV…WGLF), 86-106 (IFYS…AYPW), 116-136 (EFYL…SAQH), 137-157 (LAAV…LLGY), 171-191 (YFVL…MLYA), 215-235 (ILAG…LVPF), 253-273 (FLGT…FLYV), 281-301 (LNTA…LMAL), 309-329 (LLGY…IALH), 338-358 (VAVY…VVSL), 385-405 (AAVM…LGFI), 420-439 (WVLT…YYLR), and 461-481 (AFTA…VFGI).

Belongs to the complex I subunit 2 family. NDH-1 is composed of 13 different subunits. Subunits NuoA, H, J, K, L, M, N constitute the membrane sector of the complex.

The protein resides in the cell membrane. It carries out the reaction a quinone + NADH + 5 H(+)(in) = a quinol + NAD(+) + 4 H(+)(out). In terms of biological role, NDH-1 shuttles electrons from NADH, via FMN and iron-sulfur (Fe-S) centers, to quinones in the respiratory chain. The immediate electron acceptor for the enzyme in this species is believed to be ubiquinone. Couples the redox reaction to proton translocation (for every two electrons transferred, four hydrogen ions are translocated across the cytoplasmic membrane), and thus conserves the redox energy in a proton gradient. In Hamiltonella defensa subsp. Acyrthosiphon pisum (strain 5AT), this protein is NADH-quinone oxidoreductase subunit N.